The sequence spans 466 residues: ATP synthase subunit beta (466 aa).

153 to 160 contacts ATP; the sequence is GGAGVGKT.

Belongs to the ATPase alpha/beta chains family. F-type ATPases have 2 components, CF(1) - the catalytic core - and CF(0) - the membrane proton channel. CF(1) has five subunits: alpha(3), beta(3), gamma(1), delta(1), epsilon(1). CF(0) has three main subunits: a(1), b(2) and c(9-12). The alpha and beta chains form an alternating ring which encloses part of the gamma chain. CF(1) is attached to CF(0) by a central stalk formed by the gamma and epsilon chains, while a peripheral stalk is formed by the delta and b chains.

The protein localises to the cell membrane. It carries out the reaction ATP + H2O + 4 H(+)(in) = ADP + phosphate + 5 H(+)(out). Its function is as follows. Produces ATP from ADP in the presence of a proton gradient across the membrane. The catalytic sites are hosted primarily by the beta subunits. The polypeptide is ATP synthase subunit beta (Leuconostoc citreum (strain KM20)).